The following is a 110-amino-acid chain: MFGGKGGLGNLMKQAQQMQEKMQKMQEEIAQLEVTGESGAGLVKVTINGAHNCRRVEIDPSLLEDDKEMLEDLVAAAFNDAARRIEETQKEKMASVSAGMQLPPGFKMPF.

Belongs to the YbaB/EbfC family. As to quaternary structure, homodimer.

It localises to the cytoplasm. The protein resides in the nucleoid. Binds to DNA and alters its conformation. May be involved in regulation of gene expression, nucleoid organization and DNA protection. This chain is Nucleoid-associated protein KPN78578_04440, found in Klebsiella pneumoniae subsp. pneumoniae (strain ATCC 700721 / MGH 78578).